Here is a 325-residue protein sequence, read N- to C-terminus: Probable cell division protein WhiA (325 aa).

A DNA-binding region (H-T-H motif) is located at residues 273 to 306 (SLEELGRLADPPMTKDAVAGRIRRLLSMADRKAK).

Belongs to the WhiA family.

Functionally, involved in cell division and chromosome segregation. The polypeptide is Probable cell division protein WhiA (Mycobacterium bovis (strain BCG / Tokyo 172 / ATCC 35737 / TMC 1019)).